Here is a 457-residue protein sequence, read N- to C-terminus: Siroheme synthase (457 aa).

The interval 1 to 204 is precorrin-2 dehydrogenase /sirohydrochlorin ferrochelatase; the sequence is MDHLPIFCQL…ADAKAVSEIT (204 aa). Residues 22 to 23 and 43 to 44 contribute to the NAD(+) site; these read DV and LA. Serine 128 is modified (phosphoserine). Residues 216–457 are uroporphyrinogen-III C-methyltransferase; that stretch reads GEVVLVGAGP…RDKLNWFSNH (242 aa). Proline 225 provides a ligand contact to S-adenosyl-L-methionine. Residue aspartate 248 is the Proton acceptor of the active site. Lysine 270 (proton donor) is an active-site residue. S-adenosyl-L-methionine contacts are provided by residues 301–303, isoleucine 306, 331–332, methionine 382, and glycine 411; these read GGD and TA.

In the N-terminal section; belongs to the precorrin-2 dehydrogenase / sirohydrochlorin ferrochelatase family. This sequence in the C-terminal section; belongs to the precorrin methyltransferase family.

It carries out the reaction uroporphyrinogen III + 2 S-adenosyl-L-methionine = precorrin-2 + 2 S-adenosyl-L-homocysteine + H(+). The enzyme catalyses precorrin-2 + NAD(+) = sirohydrochlorin + NADH + 2 H(+). It catalyses the reaction siroheme + 2 H(+) = sirohydrochlorin + Fe(2+). It functions in the pathway cofactor biosynthesis; adenosylcobalamin biosynthesis; precorrin-2 from uroporphyrinogen III: step 1/1. It participates in cofactor biosynthesis; adenosylcobalamin biosynthesis; sirohydrochlorin from precorrin-2: step 1/1. Its pathway is porphyrin-containing compound metabolism; siroheme biosynthesis; precorrin-2 from uroporphyrinogen III: step 1/1. The protein operates within porphyrin-containing compound metabolism; siroheme biosynthesis; siroheme from sirohydrochlorin: step 1/1. It functions in the pathway porphyrin-containing compound metabolism; siroheme biosynthesis; sirohydrochlorin from precorrin-2: step 1/1. Functionally, multifunctional enzyme that catalyzes the SAM-dependent methylations of uroporphyrinogen III at position C-2 and C-7 to form precorrin-2 via precorrin-1. Then it catalyzes the NAD-dependent ring dehydrogenation of precorrin-2 to yield sirohydrochlorin. Finally, it catalyzes the ferrochelation of sirohydrochlorin to yield siroheme. The sequence is that of Siroheme synthase from Citrobacter koseri (strain ATCC BAA-895 / CDC 4225-83 / SGSC4696).